The primary structure comprises 85 residues: Large ribosomal subunit protein bL27 (85 aa).

The disordered stretch occupies residues Met-1–Arg-20.

Belongs to the bacterial ribosomal protein bL27 family.

This chain is Large ribosomal subunit protein bL27, found in Cronobacter sakazakii (strain ATCC BAA-894) (Enterobacter sakazakii).